Reading from the N-terminus, the 345-residue chain is 1-aminocyclopropane-1-carboxylate oxidase homolog 7 (345 aa).

Lys16 participates in a covalent cross-link: Glycyl lysine isopeptide (Lys-Gly) (interchain with G-Cter in ubiquitin). Residues 194-293 enclose the Fe2OG dioxygenase domain; the sequence is KGLHMICHYY…RISIACFFSS (100 aa). Fe cation contacts are provided by His218, Asp220, and His274. A 2-oxoglutarate-binding site is contributed by Arg284.

The protein belongs to the iron/ascorbate-dependent oxidoreductase family. Fe(2+) is required as a cofactor.

This chain is 1-aminocyclopropane-1-carboxylate oxidase homolog 7, found in Arabidopsis thaliana (Mouse-ear cress).